The sequence spans 149 residues: Transcriptional repressor NrdR (149 aa).

Residues 3 to 34 fold into a zinc finger; the sequence is CPFCFAVDTKVIDSRLVGEGSSVRRRRQCLVC. The 91-residue stretch at 49–139 folds into the ATP-cone domain; that stretch reads PRVIKSNDVR…VYRSFEDIKD (91 aa).

Belongs to the NrdR family. It depends on Zn(2+) as a cofactor.

Functionally, negatively regulates transcription of bacterial ribonucleotide reductase nrd genes and operons by binding to NrdR-boxes. In Salmonella schwarzengrund (strain CVM19633), this protein is Transcriptional repressor NrdR.